Reading from the N-terminus, the 275-residue chain is Undecaprenyl-diphosphatase (275 aa).

8 consecutive transmembrane segments (helical) span residues 4–24, 44–64, 85–105, 113–133, 149–169, 188–208, 226–246, and 255–275; these read LNVI…WLPI, AFMD…VVVL, WTLW…GFPL, LMQN…FIVI, TLPW…IIPG, FVGA…VSIL, IILL…IKFL, and FKVF…AMFL.

The protein belongs to the UppP family.

Its subcellular location is the cell membrane. The enzyme catalyses di-trans,octa-cis-undecaprenyl diphosphate + H2O = di-trans,octa-cis-undecaprenyl phosphate + phosphate + H(+). Its function is as follows. Catalyzes the dephosphorylation of undecaprenyl diphosphate (UPP). Confers resistance to bacitracin. The sequence is that of Undecaprenyl-diphosphatase from Latilactobacillus sakei subsp. sakei (strain 23K) (Lactobacillus sakei subsp. sakei).